The following is a 201-amino-acid chain: High mobility group protein homolog 068R (201 aa).

2 consecutive DNA-binding regions (HMG box) follow at residues 70 to 138 (PKRN…ELEK) and 143 to 201 (TPSK…KAAK).

This sequence belongs to the IIV-6 401R family.

It is found in the host nucleus. The polypeptide is High mobility group protein homolog 068R (Invertebrate iridescent virus 3 (IIV-3)).